The primary structure comprises 476 residues: Cysteine--tRNA ligase (476 aa).

C36 serves as a coordination point for Zn(2+). The short motif at 38-48 (PTVYDYAHIGN) is the 'HIGH' region element. 3 residues coordinate Zn(2+): C221, H246, and E250. Positions 278–282 (KMSKS) match the 'KMSKS' region motif. Position 281 (K281) interacts with ATP.

Belongs to the class-I aminoacyl-tRNA synthetase family. Monomer. It depends on Zn(2+) as a cofactor.

The protein resides in the cytoplasm. It carries out the reaction tRNA(Cys) + L-cysteine + ATP = L-cysteinyl-tRNA(Cys) + AMP + diphosphate. The protein is Cysteine--tRNA ligase of Chlamydia abortus (strain DSM 27085 / S26/3) (Chlamydophila abortus).